We begin with the raw amino-acid sequence, 150 residues long: uncharacterized protein (150 aa).

The interval arginine 75–threonine 150 is disordered. The span at glutamine 86 to alanine 103 shows a compositional bias: low complexity.

This is an uncharacterized protein from Homo sapiens (Human).